A 1293-amino-acid chain; its full sequence is Enterobactin synthase component F (1293 aa).

Residues 1 to 301 form an elongation/condensation region; sequence MSQHLPLVAA…NVLPLGIHIA (301 aa). Residues 482–887 form an adenylatione region; the sequence is SYREMREQVV…ALPDVEQAVT (406 aa). The Carrier domain occupies 971–1046; the sequence is APKAGSETII…KLATIIDAEE (76 aa). S1006 carries the O-(pantetheine 4'-phosphoryl)serine modification. The interval 1066–1293 is thioesterase; that stretch reads PTLFCFHPAS…GPIIRATLNR (228 aa). H1271 functions as the Proton acceptor; for thioesterase activity in the catalytic mechanism.

The protein belongs to the ATP-dependent AMP-binding enzyme family. EntF subfamily. As to quaternary structure, proteins EntB, EntD, EntE and EntF are the component of the enterobactin synthase. Components probably do not form a stable complex. EntF acts as a catalytic monomer. Interacts with the MbtH-like protein YbdZ. YbdZ binds to the adenylation domain, but does not alter the structure of the domain. Pantetheine 4'-phosphate is required as a cofactor. 4'-phosphopantetheine is transferred from CoA to a specific serine of apo-EntF by EntD. Holo-EntF so formed is then acylated with seryl-AMP.

It is found in the cytoplasm. The enzyme catalyses 3 2,3-dihydroxybenzoate + 3 L-serine + 6 ATP = enterobactin + 6 AMP + 6 diphosphate + 4 H(+). The catalysed reaction is holo-[peptidyl-carrier protein] + L-serine + ATP = L-seryl-[peptidyl-carrier protein] + AMP + diphosphate. It functions in the pathway siderophore biosynthesis; enterobactin biosynthesis. With respect to regulation, adenylation activity is increased in the presence of the MbtH-like protein YbdZ. Its function is as follows. Involved in the biosynthesis of the siderophore enterobactin (enterochelin), which is a macrocyclic trimeric lactone of N-(2,3-dihydroxybenzoyl)-serine. EntF catalyzes the activation of L-serine via ATP-dependent PPi exchange reaction to form seryladenylate. Activated L-serine is loaded onto the peptidyl carrier domain via a thioester linkage to the phosphopanthetheine moiety, forming seryl-S-Ppant-EntF. EntF acts then as the sole catalyst for the formation of the three amide and three ester linkages found in enterobactin, using seryladenylate and 2,3-dihydroxybenzoate-S-Ppant-EntB (DHB-S-Ppant-EntB) as substrates, via the formation of a DHB-Ser-S-Ppant-EntF intermediate. This Escherichia coli (strain K12) protein is Enterobactin synthase component F.